The following is a 74-amino-acid chain: Cytochrome c oxidase assembly factor 5 (74 aa).

One can recognise a CHCH domain in the interval 27-65 (QSDCVLKEGKSPRQCLKEGNCKALKYSFFECKRSMLDAR). The Cx10C motif motif lies at 30 to 41 (CVLKEGKSPRQC). Disulfide bonds link cysteine 30-cysteine 57 and cysteine 41-cysteine 47. Serine 37 carries the phosphoserine modification. A Cx9C motif motif is present at residues 47 to 57 (CKALKYSFFEC).

Belongs to the PET191 family.

Involved in an early step of the mitochondrial complex IV assembly process. This Bos taurus (Bovine) protein is Cytochrome c oxidase assembly factor 5 (COA5).